Reading from the N-terminus, the 484-residue chain is Chromosomal replication initiator protein DnaA (484 aa).

A domain I, interacts with DnaA modulators region spans residues 1–73 (MQEGKNIWSL…EILIEKGHST (73 aa)). The segment at 73 to 140 (TINVEFIHSQ…EEIHIKYRNP (68 aa)) is domain II. The interval 141-357 (FLKKKYTFEN…AAVTKLKAHI (217 aa)) is domain III, AAA+ region. Residues Gly-185, Gly-187, Lys-188, and Thr-189 each contribute to the ATP site. The segment at 358–484 (DLEDIEIDTN…IELMNKINKN (127 aa)) is domain IV, binds dsDNA.

Belongs to the DnaA family. In terms of assembly, oligomerizes as a right-handed, spiral filament on DNA at oriC.

The protein resides in the cytoplasm. Plays an essential role in the initiation and regulation of chromosomal replication. ATP-DnaA binds to the origin of replication (oriC) to initiate formation of the DNA replication initiation complex once per cell cycle. Binds the DnaA box (a 9 base pair repeat at the origin) and separates the double-stranded (ds)DNA. Forms a right-handed helical filament on oriC DNA; dsDNA binds to the exterior of the filament while single-stranded (ss)DNA is stabiized in the filament's interior. The ATP-DnaA-oriC complex binds and stabilizes one strand of the AT-rich DNA unwinding element (DUE), permitting loading of DNA polymerase. After initiation quickly degrades to an ADP-DnaA complex that is not apt for DNA replication. Binds acidic phospholipids. This chain is Chromosomal replication initiator protein DnaA, found in Borrelia duttonii (strain Ly).